The sequence spans 303 residues: Bifunctional protein FolD (303 aa).

Residues 165–167, Ser190, and Ile231 each bind NADP(+); that span reads GRS.

Belongs to the tetrahydrofolate dehydrogenase/cyclohydrolase family. As to quaternary structure, homodimer.

The enzyme catalyses (6R)-5,10-methylene-5,6,7,8-tetrahydrofolate + NADP(+) = (6R)-5,10-methenyltetrahydrofolate + NADPH. The catalysed reaction is (6R)-5,10-methenyltetrahydrofolate + H2O = (6R)-10-formyltetrahydrofolate + H(+). It participates in one-carbon metabolism; tetrahydrofolate interconversion. In terms of biological role, catalyzes the oxidation of 5,10-methylenetetrahydrofolate to 5,10-methenyltetrahydrofolate and then the hydrolysis of 5,10-methenyltetrahydrofolate to 10-formyltetrahydrofolate. This Prochlorococcus marinus (strain NATL1A) protein is Bifunctional protein FolD.